A 460-amino-acid polypeptide reads, in one-letter code: NADH-ubiquinone oxidoreductase chain 4 (460 aa).

A run of 13 helical transmembrane segments spans residues 20–42 (SKWL…LTWL), 61–81 (PLST…ILAS), 94–113 (RMYI…AFGA), 114–134 (TKII…LIII), 148–168 (TYFL…LLLL), 195–215 (IWWA…GMHL), 225–245 (PVAG…YGMM), 258–278 (LAYP…LVCL), 285–304 (SLIA…GILI), 308–330 (WGFT…LFCL), 351–371 (MVLP…LALP), 380–400 (LMII…TGMG), and 436–456 (LLMT…ELMW).

This sequence belongs to the complex I subunit 4 family. Core subunit of respiratory chain NADH dehydrogenase (Complex I) which is composed of 45 different subunits.

It localises to the mitochondrion inner membrane. The catalysed reaction is a ubiquinone + NADH + 5 H(+)(in) = a ubiquinol + NAD(+) + 4 H(+)(out). Its function is as follows. Core subunit of the mitochondrial membrane respiratory chain NADH dehydrogenase (Complex I) which catalyzes electron transfer from NADH through the respiratory chain, using ubiquinone as an electron acceptor. Essential for the catalytic activity and assembly of complex I. The polypeptide is NADH-ubiquinone oxidoreductase chain 4 (mt-nd4) (Danio rerio (Zebrafish)).